The sequence spans 82 residues: ATP synthase subunit c (82 aa).

The next 2 helical transmembrane spans lie at 7–27 (LVAL…CIGI) and 53–73 (FLLA…AMLF).

Belongs to the ATPase C chain family. F-type ATPases have 2 components, F(1) - the catalytic core - and F(0) - the membrane proton channel. F(1) has five subunits: alpha(3), beta(3), gamma(1), delta(1), epsilon(1). F(0) has three main subunits: a(1), b(2) and c(10-14). The alpha and beta chains form an alternating ring which encloses part of the gamma chain. F(1) is attached to F(0) by a central stalk formed by the gamma and epsilon chains, while a peripheral stalk is formed by the delta and b chains.

The protein localises to the cell inner membrane. F(1)F(0) ATP synthase produces ATP from ADP in the presence of a proton or sodium gradient. F-type ATPases consist of two structural domains, F(1) containing the extramembraneous catalytic core and F(0) containing the membrane proton channel, linked together by a central stalk and a peripheral stalk. During catalysis, ATP synthesis in the catalytic domain of F(1) is coupled via a rotary mechanism of the central stalk subunits to proton translocation. Functionally, key component of the F(0) channel; it plays a direct role in translocation across the membrane. A homomeric c-ring of between 10-14 subunits forms the central stalk rotor element with the F(1) delta and epsilon subunits. The chain is ATP synthase subunit c from Leptothrix cholodnii (strain ATCC 51168 / LMG 8142 / SP-6) (Leptothrix discophora (strain SP-6)).